The primary structure comprises 353 residues: tRNA N6-adenosine threonylcarbamoyltransferase (353 aa).

The Fe cation site is built by histidine 115 and histidine 119. Substrate-binding positions include 138–142 (LVSGG), aspartate 171, glycine 184, and asparagine 276. Aspartate 304 lines the Fe cation pocket.

Belongs to the KAE1 / TsaD family. It depends on Fe(2+) as a cofactor.

The protein resides in the cytoplasm. The enzyme catalyses L-threonylcarbamoyladenylate + adenosine(37) in tRNA = N(6)-L-threonylcarbamoyladenosine(37) in tRNA + AMP + H(+). Its function is as follows. Required for the formation of a threonylcarbamoyl group on adenosine at position 37 (t(6)A37) in tRNAs that read codons beginning with adenine. Is involved in the transfer of the threonylcarbamoyl moiety of threonylcarbamoyl-AMP (TC-AMP) to the N6 group of A37, together with TsaE and TsaB. TsaD likely plays a direct catalytic role in this reaction. The chain is tRNA N6-adenosine threonylcarbamoyltransferase from Xanthomonas euvesicatoria pv. vesicatoria (strain 85-10) (Xanthomonas campestris pv. vesicatoria).